Here is a 161-residue protein sequence, read N- to C-terminus: RNA pyrophosphohydrolase (161 aa).

The 144-residue stretch at 6-149 (GFRPNVGIIL…KRDVYRKAMV (144 aa)) folds into the Nudix hydrolase domain. The Nudix box motif lies at 38–59 (GGIQFGETPEQALFRELREEIG).

This sequence belongs to the Nudix hydrolase family. RppH subfamily. It depends on a divalent metal cation as a cofactor.

In terms of biological role, accelerates the degradation of transcripts by removing pyrophosphate from the 5'-end of triphosphorylated RNA, leading to a more labile monophosphorylated state that can stimulate subsequent ribonuclease cleavage. The chain is RNA pyrophosphohydrolase from Acinetobacter baumannii (strain AB307-0294).